Reading from the N-terminus, the 84-residue chain is Small ribosomal subunit protein eS27w (84 aa).

The C4-type zinc-finger motif lies at 39 to 61 (CQGCFNITTVFSHSQTVVVCGNC).

Belongs to the eukaryotic ribosomal protein eS27 family. It depends on Zn(2+) as a cofactor.

This Arabidopsis thaliana (Mouse-ear cress) protein is Small ribosomal subunit protein eS27w (RPS27D).